The following is a 397-amino-acid chain: Tryptophan synthase beta chain (397 aa).

Residue lysine 91 is modified to N6-(pyridoxal phosphate)lysine.

Belongs to the TrpB family. Tetramer of two alpha and two beta chains. It depends on pyridoxal 5'-phosphate as a cofactor.

The catalysed reaction is (1S,2R)-1-C-(indol-3-yl)glycerol 3-phosphate + L-serine = D-glyceraldehyde 3-phosphate + L-tryptophan + H2O. The protein operates within amino-acid biosynthesis; L-tryptophan biosynthesis; L-tryptophan from chorismate: step 5/5. Functionally, the beta subunit is responsible for the synthesis of L-tryptophan from indole and L-serine. The protein is Tryptophan synthase beta chain of Bacillus thuringiensis (strain Al Hakam).